The following is an 852-amino-acid chain: MAHVNNYLLVTLLLISIYGYMGKNFVTVFYGIPAWKNASIPLFCATRNRDTWGTVQCLPDNDDYTEIQLNITEAFDAWDNTVTDQATKDVWSLFETSIKPCVKLTPLCVTMKCNKTWSSASKETTTSSASLRSSTQTLLNEDSKCIQNDSCAGIGLEEMIDCQFKMTGLKRDESKQYKDTWYKQDLVCEKGTRSNESKCYIKTCNTSIIQESCDKHYWDSLRFRYCAPPGFALLRCNDTKYSGFMPNCSKVVVSLYRMMETQTSTWFGFNGTRAENRTYIYWHGKDNRTIISLNSYYNLTMHCKRPGNKMVVPIRTVSGILFHSQPINKRPKQAWCWFKGNWTEAIQEVKETIKNHPRYSGTTNISQIRLAEHARSSDPEVRYMWTNCRGEFLYCNMTFFLNWVENRTGLKRNYASCHIRQIVNTWHKIGRNVYLPPREGELSCNSTVTSLIANIDWIDKNLTNITVSAEVSELYKLELGDYKLVEITPIGFAPTSIKRYSSVTPRNKRGVLVLGFLGFLATAGSAMGAASLTLSAQSRTLLAGIVQQQQQLVDVVKRQQELLRLTVWGTKNLQARVTAIEKYLKDQAQLNSWGCAFRQVCHTTVPWVNESLKPDWNNMTWQQWERQVRFLDANITKLLEEAQIQQEKNMYELQKLNQWDIFSNWFDFTSWMAYIRLGLYIVIGIVVLRIAIYIIQMLARLRKGYRPVFSSPPSYTQQIPIRKDRGQPANEETEEGGGNNEGYRSWPWQIEYIHFPIRQLRDLLIWLYSGCRTLLSKTFQTLQPVLQPLRLPPAYLRYGISWFQEAIQAAARAAGETLASAARTSWGVLRRAAGEIIAIPRRIRQGAELALL.

An N-terminal signal peptide occupies residues methionine 1–asparagine 24. At phenylalanine 25–leucine 677 the chain is on the extracellular side. An N-linked (GlcNAc...) asparagine; by host glycan is attached at asparagine 37. Cysteine 44 and cysteine 57 are oxidised to a cystine. Residues asparagine 70, asparagine 114, asparagine 148, asparagine 195, asparagine 205, asparagine 237, asparagine 247, asparagine 270, asparagine 276, asparagine 287, and asparagine 298 are each glycosylated (N-linked (GlcNAc...) asparagine; by host). 4 disulfide bridges follow: cysteine 101–cysteine 213, cysteine 108–cysteine 204, cysteine 113–cysteine 162, and cysteine 236–cysteine 248. The segment at cysteine 113–aspartate 161 is V1. A V2 region spans residues cysteine 162–cysteine 204. The V3 stretch occupies residues cysteine 303–tryptophan 335. Cysteine 303 and cysteine 336 are joined by a disulfide. 7 N-linked (GlcNAc...) asparagine; by host glycosylation sites follow: asparagine 341, asparagine 364, asparagine 396, asparagine 406, asparagine 445, asparagine 461, and asparagine 464. 2 disulfides stabilise this stretch: cysteine 388-cysteine 444 and cysteine 395-cysteine 417. The V4 stretch occupies residues cysteine 395–cysteine 417. A V5 region spans residues asparagine 461–valine 467. Residues glycine 510 to alanine 530 form a fusion peptide region. An immunosuppression region spans residues leucine 573 to glutamine 589. N-linked (GlcNAc...) asparagine; by host glycosylation is found at asparagine 609, asparagine 618, and asparagine 634. Residues glutamine 622–lysine 648 adopt a coiled-coil conformation. The segment at lysine 655–arginine 676 is MPER; binding to GalCer. Residues glycine 678–leucine 698 traverse the membrane as a helical segment. Residues alanine 699–leucine 852 lie on the Cytoplasmic side of the membrane. A YXXV motif; contains endocytosis signal motif is present at residues tyrosine 705–valine 708. The interval proline 713–asparagine 740 is disordered. Cysteine 771 is lipidated: S-palmitoyl cysteine; by host. Residues leucine 851–leucine 852 carry the Di-leucine internalization motif motif.

As to quaternary structure, the mature envelope protein (Env) consists of a homotrimer of non-covalently associated gp120-gp41 heterodimers. The resulting complex protrudes from the virus surface as a spike. There seems to be as few as 10 spikes on the average virion. Interacts with human CD4, CCR5 and CXCR4, to form a P4HB/PDI-CD4-CXCR4-gp120 complex. Gp120 also interacts with the C-type lectins CD209/DC-SIGN and CLEC4M/DC-SIGNR (collectively referred to as DC-SIGN(R)). Gp120 and gp41 interact with GalCer. The mature envelope protein (Env) consists of a homotrimer of non-covalently associated gp120-gp41 heterodimers. The resulting complex protrudes from the virus surface as a spike. There seems to be as few as 10 spikes on the average virion. In terms of processing, specific enzymatic cleavages in vivo yield mature proteins. Envelope glycoproteins are synthesized as an inactive precursor that is heavily N-glycosylated and processed likely by host cell furin in the Golgi to yield the mature SU and TM proteins. The cleavage site between SU and TM requires the minimal sequence [KR]-X-[KR]-R. Palmitoylation of the transmembrane protein and of Env polyprotein (prior to its proteolytic cleavage) is essential for their association with host cell membrane lipid rafts. Palmitoylation is therefore required for envelope trafficking to classical lipid rafts, but not for viral replication.

The protein resides in the virion membrane. Its subcellular location is the host cell membrane. The protein localises to the host endosome membrane. In terms of biological role, the surface protein gp120 (SU) attaches the virus to the host lymphoid cell by binding to the primary receptor CD4. This interaction induces a structural rearrangement creating a high affinity binding site for a chemokine coreceptor like CXCR4 and/or CCR5. This peculiar 2 stage receptor-interaction strategy allows gp120 to maintain the highly conserved coreceptor-binding site in a cryptic conformation, protected from neutralizing antibodies. Since CD4 also displays a binding site for the disulfide-isomerase P4HB/PDI, a P4HB/PDI-CD4-CXCR4-gp120 complex may form. In that complex, P4HB/PDI could reach and reduce gp120 disulfide bonds, causing major conformational changes in gp120. TXN, another PDI family member could also be involved in disulfide rearrangements in Env during fusion. These changes are transmitted to the transmembrane protein gp41 and are thought to activate its fusogenic potential by unmasking its fusion peptide. Functionally, the surface protein gp120 is a ligand for CD209/DC-SIGN and CLEC4M/DC-SIGNR, which are respectively found on dendritic cells (DCs), and on endothelial cells of liver sinusoids and lymph node sinuses. These interactions allow capture of viral particles at mucosal surfaces by these cells and subsequent transmission to permissive cells. DCs are professional antigen presenting cells, critical for host immunity by inducing specific immune responses against a broad variety of pathogens. They act as sentinels in various tissues where they take up antigen, process it, and present it to T-cells following migration to lymphoid organs. HIV subverts the migration properties of dendritic cells to gain access to CD4+ T-cells in lymph nodes. Virus transmission to permissive T-cells occurs either in trans (without DCs infection, through viral capture and transmission), or in cis (following DCs productive infection, through the usual CD4-gp120 interaction), thereby inducing a robust infection. In trans infection, bound virions remain infectious over days and it is proposed that they are not degraded, but protected in non-lysosomal acidic organelles within the DCs close to the cell membrane thus contributing to the viral infectious potential during DCs' migration from the periphery to the lymphoid tissues. On arrival at lymphoid tissues, intact virions recycle back to DCs' cell surface allowing virus transmission to CD4+ T-cells. Virion capture also seems to lead to MHC-II-restricted viral antigen presentation, and probably to the activation of HIV-specific CD4+ cells. The transmembrane protein gp41 (TM) acts as a class I viral fusion protein. Under the current model, the protein has at least 3 conformational states: pre-fusion native state, pre-hairpin intermediate state, and post-fusion hairpin state. During fusion of viral and target intracellular membranes, the coiled coil regions (heptad repeats) assume a trimer-of-hairpins structure, positioning the fusion peptide in close proximity to the C-terminal region of the ectodomain. The formation of this structure appears to drive apposition and subsequent fusion of viral and target cell membranes. Complete fusion occurs in host cell endosomes and is dynamin-dependent, however some lipid transfer might occur at the plasma membrane. The virus undergoes clathrin-dependent internalization long before endosomal fusion, thus minimizing the surface exposure of conserved viral epitopes during fusion and reducing the efficacy of inhibitors targeting these epitopes. Membranes fusion leads to delivery of the nucleocapsid into the cytoplasm. Its function is as follows. The envelope glycoprotein gp160 precursor down-modulates cell surface CD4 antigen by interacting with it in the endoplasmic reticulum and blocking its transport to the cell surface. In terms of biological role, the gp120-gp41 heterodimer seems to contribute to T-cell depletion during HIV-1 infection. The envelope glycoproteins expressed on the surface of infected cells induce apoptosis through an interaction with uninfected cells expressing the receptor (CD4) and the coreceptors CXCR4 or CCR5. This type of bystander killing may be obtained by at least three distinct mechanisms. First, the interaction between the 2 cells can induce cellular fusion followed by nuclear fusion within the syncytium. Syncytia are condemned to die from apoptosis. Second, the 2 interacting cells may not fuse entirely and simply exchange plasma membrane lipids, after a sort of hemifusion process, followed by rapid death. Third, it is possible that virus-infected cells, on the point of undergoing apoptosis, fuse with CD4-expressing cells, in which case apoptosis is rapidly transmitted from one cell to the other and thus occurs in a sort of contagious fashion. Functionally, the gp120-gp41 heterodimer allows rapid transcytosis of the virus through CD4 negative cells such as simple epithelial monolayers of the intestinal, rectal and endocervical epithelial barriers. Both gp120 and gp41 specifically recognize glycosphingolipids galactosyl-ceramide (GalCer) or 3' sulfo-galactosyl-ceramide (GalS) present in the lipid rafts structures of epithelial cells. Binding to these alternative receptors allows the rapid transcytosis of the virus through the epithelial cells. This transcytotic vesicle-mediated transport of virions from the apical side to the basolateral side of the epithelial cells does not involve infection of the cells themselves. The chain is Envelope glycoprotein gp160 (env) from Human immunodeficiency virus type 2 subtype B (isolate EHO) (HIV-2).